A 597-amino-acid polypeptide reads, in one-letter code: uncharacterized protein (597 aa).

5 helical membrane-spanning segments follow: residues 37–57 (VLII…LWPV), 67–87 (IFWL…LQFA), 109–129 (GGER…YAAI), 134–154 (SVSL…FIAW), and 162–182 (ALMT…LAIV). The 205-residue stretch at 393-597 (HQLARDLHDG…QITIFVPIES (205 aa)) folds into the Histidine kinase domain.

The protein resides in the cell membrane. This is an uncharacterized protein from Chloroflexus aurantiacus (strain ATCC 29366 / DSM 635 / J-10-fl).